Consider the following 302-residue polypeptide: UDP-N-acetylenolpyruvoylglucosamine reductase (302 aa).

An FAD-binding PCMH-type domain is found at 32–195 (LGGPADLLAR…VTVTLELVPD (164 aa)). Arginine 175 is a catalytic residue. Serine 224 serves as the catalytic Proton donor. Glutamate 294 is a catalytic residue.

The protein belongs to the MurB family. The cofactor is FAD.

It localises to the cytoplasm. The catalysed reaction is UDP-N-acetyl-alpha-D-muramate + NADP(+) = UDP-N-acetyl-3-O-(1-carboxyvinyl)-alpha-D-glucosamine + NADPH + H(+). It participates in cell wall biogenesis; peptidoglycan biosynthesis. Cell wall formation. This is UDP-N-acetylenolpyruvoylglucosamine reductase from Moorella thermoacetica (strain ATCC 39073 / JCM 9320).